Reading from the N-terminus, the 914-residue chain is Translation initiation factor IF-2 (914 aa).

Disordered stretches follow at residues 246 to 271 (EDGE…KKKG) and 293 to 313 (SGMD…QRRM). Residues 249–266 (EAAKKKAAKPDGGEDVGV) are compositionally biased toward basic and acidic residues. Residues 411-581 (TRPPVVTIMG…LAEAEIRELK (171 aa)) enclose the tr-type G domain. Positions 420-427 (GHVDHGKT) are G1. Position 420–427 (420–427 (GHVDHGKT)) interacts with GTP. The tract at residues 445 to 449 (GITQH) is G2. The tract at residues 467 to 470 (DTPG) is G3. GTP is bound by residues 467-471 (DTPGH) and 521-524 (NKID). The G4 stretch occupies residues 521-524 (NKID). The interval 557–559 (SAK) is G5.

Belongs to the TRAFAC class translation factor GTPase superfamily. Classic translation factor GTPase family. IF-2 subfamily.

It localises to the cytoplasm. In terms of biological role, one of the essential components for the initiation of protein synthesis. Protects formylmethionyl-tRNA from spontaneous hydrolysis and promotes its binding to the 30S ribosomal subunits. Also involved in the hydrolysis of GTP during the formation of the 70S ribosomal complex. The sequence is that of Translation initiation factor IF-2 from Chlorobaculum tepidum (strain ATCC 49652 / DSM 12025 / NBRC 103806 / TLS) (Chlorobium tepidum).